Here is a 156-residue protein sequence, read N- to C-terminus: Large ribosomal subunit protein uL15 (156 aa).

The span at 1–16 shows a compositional bias: basic residues; it reads MVRRFKRGTKYRRGSR. Residues 1-37 form a disordered region; it reads MVRRFKRGTKYRRGSRTHGWGRVGQHRKSGGSGGKGM.

Belongs to the universal ribosomal protein uL15 family. Part of the 50S ribosomal subunit.

Its function is as follows. Binds to the 23S rRNA. This chain is Large ribosomal subunit protein uL15, found in Pyrobaculum aerophilum (strain ATCC 51768 / DSM 7523 / JCM 9630 / CIP 104966 / NBRC 100827 / IM2).